The following is an 87-amino-acid chain: Pyocin-S2 immunity protein (87 aa).

It belongs to the colicins ColE2/ColE8/ColE9 and pyocins S1/S2 family.

The chain is Pyocin-S2 immunity protein (imm2) from Pseudomonas aeruginosa (strain ATCC 15692 / DSM 22644 / CIP 104116 / JCM 14847 / LMG 12228 / 1C / PRS 101 / PAO1).